We begin with the raw amino-acid sequence, 424 residues long: Histidine--tRNA ligase (424 aa).

Belongs to the class-II aminoacyl-tRNA synthetase family. Homodimer.

The protein resides in the cytoplasm. The enzyme catalyses tRNA(His) + L-histidine + ATP = L-histidyl-tRNA(His) + AMP + diphosphate + H(+). In Pectobacterium carotovorum subsp. carotovorum (strain PC1), this protein is Histidine--tRNA ligase.